We begin with the raw amino-acid sequence, 247 residues long: Uridylate kinase (247 aa).

Lys18–Gly21 serves as a coordination point for ATP. Gly60 contributes to the UMP binding site. Gly61 and Arg65 together coordinate ATP. UMP is bound by residues Asp80 and Thr141–Thr148. Residues Thr168, Tyr174, and Asp177 each contribute to the ATP site.

This sequence belongs to the UMP kinase family. As to quaternary structure, homohexamer.

Its subcellular location is the cytoplasm. It catalyses the reaction UMP + ATP = UDP + ADP. It participates in pyrimidine metabolism; CTP biosynthesis via de novo pathway; UDP from UMP (UMPK route): step 1/1. With respect to regulation, inhibited by UTP. In terms of biological role, catalyzes the reversible phosphorylation of UMP to UDP. This Pseudomonas putida (strain ATCC 47054 / DSM 6125 / CFBP 8728 / NCIMB 11950 / KT2440) protein is Uridylate kinase.